The following is a 323-amino-acid chain: Melanocortin receptor 3 (323 aa).

Over 1-37 (MNASCCLPSVQPTLPNGSEHLQAPFFSNQSSSAFCEQ) the chain is Extracellular. Asn-2, Asn-16, and Asn-28 each carry an N-linked (GlcNAc...) asparagine glycan. The helical transmembrane segment at 38–63 (VFIKPEVFLSLGIVSLLENILVILAV) threads the bilayer. At 64 to 75 (VRNGNLHSPMYF) the chain is on the cytoplasmic side. A helical membrane pass occupies residues 76 to 100 (FLCSLAVADMLVSVSNALETIMIAI). Residues 101 to 118 (VHSDYLTFEDQFIQHMDN) lie on the Extracellular side of the membrane. Residues 119–140 (IFDSMICISLVASICNLLAIAV) traverse the membrane as a helical segment. Residues 141 to 160 (DRYVTIFYALRYHSIMTVRK) lie on the Cytoplasmic side of the membrane. The helical transmembrane segment at 161–181 (ALTLIVAIWVCCGVCGVVFIV) threads the bilayer. At 182–186 (YSESK) the chain is on the extracellular side. The helical transmembrane segment at 187–210 (MVIVCLITMFFAMMLLMGTLYVHM) threads the bilayer. The Cytoplasmic portion of the chain corresponds to 211–245 (FLFARLHVKRIAALPPADGVAPQQHSCMKGAVTIT). Residues 246–268 (ILLGVFIFCWAPFFLHLVLIITC) traverse the membrane as a helical segment. Over 269–277 (PTNPYCICY) the chain is Extracellular. Residues 278–301 (TAHFNTYLVLIMCNSVIDPLIYAF) traverse the membrane as a helical segment. Over 302-323 (RSLELRNTFREILCGCNGMNLG) the chain is Cytoplasmic. Cys-315 carries S-palmitoyl cysteine lipidation.

Belongs to the G-protein coupled receptor 1 family. In terms of tissue distribution, brain, placental, and gut tissues.

The protein localises to the cell membrane. In terms of biological role, receptor for MSH (alpha, beta and gamma) and ACTH. This receptor is mediated by G proteins which activate adenylate cyclase. Required for expression of anticipatory patterns of activity and wakefulness during periods of limited nutrient availability and for the normal regulation of circadian clock activity in the brain. This Homo sapiens (Human) protein is Melanocortin receptor 3 (MC3R).